The sequence spans 88 residues: Putative septation protein SpoVG (88 aa).

Belongs to the SpoVG family.

Its function is as follows. Could be involved in septation. The sequence is that of Putative septation protein SpoVG from Caldicellulosiruptor saccharolyticus (strain ATCC 43494 / DSM 8903 / Tp8T 6331).